The primary structure comprises 419 residues: UDP-N-acetylglucosamine 1-carboxyvinyltransferase (419 aa).

22 to 23 (KN) is a phosphoenolpyruvate binding site. R93 provides a ligand contact to UDP-N-acetyl-alpha-D-glucosamine. The active-site Proton donor is C117. Residue C117 is modified to 2-(S-cysteinyl)pyruvic acid O-phosphothioketal. Residues 122-126 (RPVDQ), D305, and I327 each bind UDP-N-acetyl-alpha-D-glucosamine.

It belongs to the EPSP synthase family. MurA subfamily.

It is found in the cytoplasm. The enzyme catalyses phosphoenolpyruvate + UDP-N-acetyl-alpha-D-glucosamine = UDP-N-acetyl-3-O-(1-carboxyvinyl)-alpha-D-glucosamine + phosphate. Its pathway is cell wall biogenesis; peptidoglycan biosynthesis. Cell wall formation. Adds enolpyruvyl to UDP-N-acetylglucosamine. This Dichelobacter nodosus (strain VCS1703A) protein is UDP-N-acetylglucosamine 1-carboxyvinyltransferase.